A 463-amino-acid chain; its full sequence is Elongation factor 1-alpha (463 aa).

In terms of domain architecture, tr-type G spans 5-242 (KVHINIVVIG…DSIIPPQRPT (238 aa)). The G1 stretch occupies residues 14–21 (GHVDSGKS). GTP is bound at residue 14-21 (GHVDSGKS). Residues 70–74 (GITID) form a G2 region. The tract at residues 91-94 (DAPG) is G3. GTP-binding positions include 91–95 (DAPGH) and 153–156 (NKMD). Positions 153-156 (NKMD) are G4. Positions 194-196 (SGF) are G5. 5-glutamyl glycerylphosphorylethanolamine is present on residues Glu301 and Glu374. The tract at residues 443 to 463 (KSDGSSGKVTKSAQKAAPKKK) is disordered. A compositionally biased stretch (polar residues) spans 446–455 (GSSGKVTKSA).

It belongs to the TRAFAC class translation factor GTPase superfamily. Classic translation factor GTPase family. EF-Tu/EF-1A subfamily.

The protein resides in the cytoplasm. Its function is as follows. This protein promotes the GTP-dependent binding of aminoacyl-tRNA to the A-site of ribosomes during protein biosynthesis. The polypeptide is Elongation factor 1-alpha (Caenorhabditis elegans).